We begin with the raw amino-acid sequence, 718 residues long: MILCLRLCLRASRSFFSISTTNNNNNLSRFLFRFSTLPHCAASSSSSSSNLESYYANLILSSHGDSNKPNRKWSSHQFRLLLTDPNLLIRVLNMIRVKPEIAFRFFNWIQRQSDVKQSRQAFAAMLEILAENDLMSEAYLVAERSIDLGMHEIDDLLIDGSFDKLIALKLLDLLLWVYTKKSMAEKFLLSFEKMIRKGFLPSVRNCNIVLKVLRDSRMMNKASAVYETMIEHGIMPTVITFNTMLDSCFKAGDLERVDKIWLEMKRRNIEFSEVTYNILINGFSKNGKMEEARRFHGDMRRSGFAVTPYSFNPLIEGYCKQGLFDDAWGVTDEMLNAGIYPTTSTYNIYICALCDFGRIDDARELLSSMAAPDVVSYNTLMHGYIKMGKFVEASLLFDDLRAGDIHPSIVTYNTLIDGLCESGNLEGAQRLKEEMTTQLIFPDVITYTTLVKGFVKNGNLSMATEVYDEMLRKGIKPDGYAYTTRAVGELRLGDSDKAFRLHEEMVATDHHAPDLTIYNVRIDGLCKVGNLVKAIEFQRKIFRVGLVPDHVTYTTVIRGYLENGQFKMARNLYDEMLRKRLYPSVITYFVLIYGHAKAGRLEQAFQYSTEMKKRGVRPNVMTHNALLYGMCKAGNIDEAYRYLCKMEEEGIPPNKYSYTMLISKNCDFEKWEEVVKLYKEMLDKEIEPDGYTHRALFKHLEKDHESREVEFLERLLLS.

The N-terminal 11 residues, 1–11 (MILCLRLCLRA), are a transit peptide targeting the mitochondrion. 15 PPR repeats span residues 167–201 (ALKL…GFLP), 202–236 (SVRN…GIMP), 237–271 (TVIT…NIEF), 272–306 (SEVT…GFAV), 307–341 (TPYS…GIYP), 342–372 (TTST…MAAP), 373–407 (DVVS…DIHP), 408–442 (SIVT…LIFP), 443–477 (DVIT…GIKP), 478–512 (DGYA…DHHA), 514–548 (DLTI…GLVP), 549–583 (DHVT…RLYP), 584–618 (SVIT…GVRP), 619–653 (NVMT…GIPP), and 654–688 (NKYS…EIEP).

The protein belongs to the PPR family. P subfamily.

It is found in the mitochondrion. This chain is Pentatricopeptide repeat-containing protein At1g22960, mitochondrial, found in Arabidopsis thaliana (Mouse-ear cress).